A 234-amino-acid chain; its full sequence is Putative N-acetylmannosamine-6-phosphate 2-epimerase (234 aa).

This sequence belongs to the NanE family.

It catalyses the reaction an N-acyl-D-glucosamine 6-phosphate = an N-acyl-D-mannosamine 6-phosphate. It participates in amino-sugar metabolism; N-acetylneuraminate degradation; D-fructose 6-phosphate from N-acetylneuraminate: step 3/5. Its function is as follows. Converts N-acetylmannosamine-6-phosphate (ManNAc-6-P) to N-acetylglucosamine-6-phosphate (GlcNAc-6-P). The chain is Putative N-acetylmannosamine-6-phosphate 2-epimerase from Klebsiella pneumoniae (strain 342).